We begin with the raw amino-acid sequence, 115 residues long: NADH-ubiquinone oxidoreductase chain 3 (115 aa).

The next 3 membrane-spanning stretches (helical) occupy residues 3-23, 55-75, and 86-106; these read LMITLLTNTMLTSLMVLIAFW, FFLVAITFLLFDLEIALLLPL, and LTLLMSFMLIILLAIGLAYEW.

This sequence belongs to the complex I subunit 3 family. Core subunit of respiratory chain NADH dehydrogenase (Complex I) which is composed of 45 different subunits. Interacts with TMEM186. Interacts with TMEM242.

The protein resides in the mitochondrion inner membrane. The catalysed reaction is a ubiquinone + NADH + 5 H(+)(in) = a ubiquinol + NAD(+) + 4 H(+)(out). Its function is as follows. Core subunit of the mitochondrial membrane respiratory chain NADH dehydrogenase (Complex I) which catalyzes electron transfer from NADH through the respiratory chain, using ubiquinone as an electron acceptor. Essential for the catalytic activity of complex I. This chain is NADH-ubiquinone oxidoreductase chain 3, found in Loxodonta africana (African elephant).